Reading from the N-terminus, the 406-residue chain is MQTLETPKPLTNTSPEFDTTIHRRQTRPVKVGDITIGGGYPVVVQSMINEDTLDIEGSVAGIRRLHEIGCEIVRVTVPSMAHAKALAEINQKLAEVYRRVPLVADVHHNGLKIALEVAKHVDKVRINPGLYVFEKPSTTRSEYTQAEFDEIGEKISETLKPLVVSLRDQGKAMRIGVNHGSLAERMLFTYGDTPEGMVESALEFIRICESLDFRNLVISLKASRVPVMLAAYRLMVKRMDELGMDYPLHLGVTEAGDGEYGRIKSTAGIATLLAEGIGDTIRVSLTEAPEKEIPVCYSILQALGLRKTMVEYVACPSCGRTLFNLEEVLHKVREATKHLTGLDIAVMGCIVNGPGEMADADYGYVGKQAGYISLYRGREEIKRVPEDQGVQELIELIKADGRWVEP.

The [4Fe-4S] cluster site is built by Cys315, Cys318, Cys349, and Glu356.

The protein belongs to the IspG family. The cofactor is [4Fe-4S] cluster.

The enzyme catalyses (2E)-4-hydroxy-3-methylbut-2-enyl diphosphate + 2 oxidized [2Fe-2S]-[ferredoxin] + H2O = 2-C-methyl-D-erythritol 2,4-cyclic diphosphate + 2 reduced [2Fe-2S]-[ferredoxin] + H(+). The protein operates within isoprenoid biosynthesis; isopentenyl diphosphate biosynthesis via DXP pathway; isopentenyl diphosphate from 1-deoxy-D-xylulose 5-phosphate: step 5/6. In terms of biological role, converts 2C-methyl-D-erythritol 2,4-cyclodiphosphate (ME-2,4cPP) into 1-hydroxy-2-methyl-2-(E)-butenyl 4-diphosphate. This is 4-hydroxy-3-methylbut-2-en-1-yl diphosphate synthase (ferredoxin) from Rippkaea orientalis (strain PCC 8801 / RF-1) (Cyanothece sp. (strain PCC 8801)).